The chain runs to 400 residues: CinA-like protein (400 aa).

This sequence belongs to the CinA family.

This Escherichia coli (strain K12 / MC4100 / BW2952) protein is CinA-like protein.